The sequence spans 80 residues: Cell division protein ZapB (80 aa).

Residues 3-80 adopt a coiled-coil conformation; the sequence is FEVFEKLEAK…ALLGKMEDVQ (78 aa).

It belongs to the ZapB family. In terms of assembly, homodimer. The ends of the coiled-coil dimer bind to each other, forming polymers. Interacts with FtsZ.

It is found in the cytoplasm. In terms of biological role, non-essential, abundant cell division factor that is required for proper Z-ring formation. It is recruited early to the divisome by direct interaction with FtsZ, stimulating Z-ring assembly and thereby promoting cell division earlier in the cell cycle. Its recruitment to the Z-ring requires functional FtsA or ZipA. This chain is Cell division protein ZapB, found in Photorhabdus laumondii subsp. laumondii (strain DSM 15139 / CIP 105565 / TT01) (Photorhabdus luminescens subsp. laumondii).